Reading from the N-terminus, the 396-residue chain is 1-deoxy-D-xylulose 5-phosphate reductoisomerase (396 aa).

5 residues coordinate NADPH: Thr13, Gly14, Ser15, Ile16, and Asn127. Lys128 is a 1-deoxy-D-xylulose 5-phosphate binding site. Residue Glu129 participates in NADPH binding. Asp153 serves as a coordination point for Mn(2+). 1-deoxy-D-xylulose 5-phosphate contacts are provided by Ser154, Glu155, Ser184, and His207. Glu155 contributes to the Mn(2+) binding site. Position 213 (Gly213) interacts with NADPH. 1-deoxy-D-xylulose 5-phosphate-binding residues include Ser220, Asn225, Lys226, and Glu229. Residue Glu229 coordinates Mn(2+).

The protein belongs to the DXR family. The cofactor is Mg(2+). Mn(2+) serves as cofactor.

It carries out the reaction 2-C-methyl-D-erythritol 4-phosphate + NADP(+) = 1-deoxy-D-xylulose 5-phosphate + NADPH + H(+). It participates in isoprenoid biosynthesis; isopentenyl diphosphate biosynthesis via DXP pathway; isopentenyl diphosphate from 1-deoxy-D-xylulose 5-phosphate: step 1/6. Its function is as follows. Catalyzes the NADPH-dependent rearrangement and reduction of 1-deoxy-D-xylulose-5-phosphate (DXP) to 2-C-methyl-D-erythritol 4-phosphate (MEP). This is 1-deoxy-D-xylulose 5-phosphate reductoisomerase from Pseudomonas syringae pv. tomato (strain ATCC BAA-871 / DC3000).